Consider the following 439-residue polypeptide: Acyl-coenzyme A thioesterase 10, mitochondrial (439 aa).

Residues 1–21 (MKRAAMRLWTLNKGLLTHGRG) constitute a mitochondrion transit peptide. HotDog ACOT-type domains are found at residues 85–209 (SYIE…QDSE) and 289–401 (EDTK…EKEV).

It belongs to the acyl coenzyme A hydrolase family.

The protein resides in the mitochondrion. Its function is as follows. Catalyzes the hydrolysis of acyl-CoAs into free fatty acids and coenzyme A (CoASH), regulating their respective intracellular levels. Active on long chain acyl-CoAs. The protein is Acyl-coenzyme A thioesterase 10, mitochondrial of Mus musculus (Mouse).